The chain runs to 752 residues: MADLVDHSPHHATKAAKLASASNVILIDNYDSFTWNIYQYLVLEGATVTVYRNDEVTVEDLVAKKPTQLVISPGPGHPDTDAGISNAVIKHFSGKVPIFGVCMGQQCMITSFGGKVDVTGEILHGKTSELKHDSKGVYQGLPTSLEVTRYHSLAGTHSTIPDCLEVTSRVELGDASGKNIIMGVRHKEFAVEGVQFHPESILTQYGRKMFRNFLELTAGTWDNKQGAAVAAPADKKLSILDKIYAHRKNAVDEQKKIPALRPEALQAAYDLNIAPPQLSFPDRLRQSDYPLSLMAEIKRASPSKGIISANVCAPAQAREYAKAGASVISVLTEPEWFKGTIDDLRAVRQSLEGLPNRPAVLRKEFVFEEYQILEARLAGADTVLLIVKMLDIELLTRLYHYSRSLGMEPLVEVNTPEEMKIAVDLGSEVIGVNNRDLTSFEVDLGTTSRLMDQVPESTIVCALSGISGPQDVEAYKKEGVKAILVGEALMRAPDTSAFVAQLLGGSNQNFAGASPSSPLVKICGTRTEEGALAAIQAGADLIGIIMVQGRSRLVPDDVALGISRVVKSTPRPADTLQQPSSATSLEWFDHSTNILRHPSRALLVGVFMNQPLSYVVSQQQKLGLDVVQLHGSEPLEWSSLIPVPVIRKFAPGDIGIARRAYHTLPLLDSGAGGSGELLEESGVKKVLDSDEGLRVILAGGLNPDNVAGTVKKLGQSGQKVVGLDVSSGVETNGAQDLEKIRAFVKSAKSIRQ.

The 201-residue stretch at 23–223 (NVILIDNYDS…LELTAGTWDN (201 aa)) folds into the Glutamine amidotransferase type-1 domain. 74–76 (GPG) is a binding site for L-glutamine. The active-site Nucleophile; for GATase activity is cysteine 102. Residues glutamine 106 and 152-153 (SL) each bind L-glutamine. Residues histidine 197 and glutamate 199 each act as for GATase activity in the active site. The segment at 239 to 503 (ILDKIYAHRK…DTSAFVAQLL (265 aa)) is indole-3-glycerol phosphate synthase. The segment at 519-752 (LVKICGTRTE…FVKSAKSIRQ (234 aa)) is N-(5'-phosphoribosyl)anthranilate isomerase.

The catalysed reaction is N-(5-phospho-beta-D-ribosyl)anthranilate = 1-(2-carboxyphenylamino)-1-deoxy-D-ribulose 5-phosphate. It carries out the reaction 1-(2-carboxyphenylamino)-1-deoxy-D-ribulose 5-phosphate + H(+) = (1S,2R)-1-C-(indol-3-yl)glycerol 3-phosphate + CO2 + H2O. It catalyses the reaction chorismate + L-glutamine = anthranilate + pyruvate + L-glutamate + H(+). It participates in amino-acid biosynthesis; L-tryptophan biosynthesis; L-tryptophan from chorismate: step 1/5. The protein operates within amino-acid biosynthesis; L-tryptophan biosynthesis; L-tryptophan from chorismate: step 3/5. Its pathway is amino-acid biosynthesis; L-tryptophan biosynthesis; L-tryptophan from chorismate: step 4/5. Trifunctional enzyme bearing the Gln amidotransferase (GATase) domain of anthranilate synthase, indole-glycerolphosphate synthase, and phosphoribosylanthranilate isomerase activities. The chain is Multifunctional tryptophan biosynthesis protein (trpC) from Penicillium chrysogenum (Penicillium notatum).